Consider the following 574-residue polypeptide: Laccase-12 (574 aa).

A signal peptide spans 1–27 (MAAASSVLRCCLLVAALMTLSAMGAEA). Plastocyanin-like domains follow at residues 35 to 151 (DVQT…PPAG) and 161 to 314 (EEVP…YDDP). A glycan (N-linked (GlcNAc...) asparagine) is linked at Asn-81. Residues His-85, His-87, His-130, and His-132 each contribute to the Cu cation site. Residues Asn-173, Asn-190, Asn-206, Asn-242, Asn-302, Asn-335, Asn-342, Asn-381, Asn-388, Asn-398, Asn-434, Asn-441, and Asn-447 are each glycosylated (N-linked (GlcNAc...) asparagine). A Plastocyanin-like 3 domain is found at 424–558 (NFPYYPLNPF…KMAWLVLDGS (135 aa)). His-475, His-478, His-480, His-537, Cys-538, His-539, and His-543 together coordinate Cu cation.

This sequence belongs to the multicopper oxidase family. Cu cation serves as cofactor.

The protein localises to the secreted. It is found in the extracellular space. Its subcellular location is the apoplast. It carries out the reaction 4 hydroquinone + O2 = 4 benzosemiquinone + 2 H2O. Its function is as follows. Lignin degradation and detoxification of lignin-derived products. This Oryza sativa subsp. japonica (Rice) protein is Laccase-12 (LAC12).